The sequence spans 413 residues: Cell division protein FtsZ 2 (413 aa).

GTP is bound by residues 130–132 (GTG), glutamate 169, arginine 173, and aspartate 216.

This sequence belongs to the FtsZ family. In terms of assembly, homodimer. Polymerizes to form a dynamic ring structure in a strictly GTP-dependent manner. Interacts directly with several other division proteins.

Its subcellular location is the cytoplasm. Functionally, essential cell division protein that forms a contractile ring structure (Z ring) at the future cell division site. The regulation of the ring assembly controls the timing and the location of cell division. One of the functions of the FtsZ ring is to recruit other cell division proteins to the septum to produce a new cell wall between the dividing cells. Binds GTP and shows GTPase activity. The protein is Cell division protein FtsZ 2 of Pyrococcus abyssi (strain GE5 / Orsay).